Here is a 116-residue protein sequence, read N- to C-terminus: uncharacterized protein (116 aa).

Residues 5–23 form a helical membrane-spanning segment; the sequence is LLAVETWYMLILSFRFLFF.

Its subcellular location is the membrane. This is an uncharacterized protein from Saccharomyces cerevisiae (strain ATCC 204508 / S288c) (Baker's yeast).